A 363-amino-acid polypeptide reads, in one-letter code: SWIRM domain-containing protein YOR338W (363 aa).

Disordered regions lie at residues 1 to 22 and 186 to 208; these read MLDN…GGIN and LYED…VPVR. Positions 186–196 are enriched in basic and acidic residues; it reads LYEDDGNRSEN. In terms of domain architecture, SWIRM spans 266–363; that stretch reads LKVEWKGSPM…LQDKHFEKYL (98 aa).

This chain is SWIRM domain-containing protein YOR338W, found in Saccharomyces cerevisiae (strain ATCC 204508 / S288c) (Baker's yeast).